Reading from the N-terminus, the 155-residue chain is V-type proton ATPase 16 kDa proteolipid subunit c (155 aa).

Residues 1-10 are Lumenal-facing; the sequence is MADIKNNPEY. The helical transmembrane segment at 11–33 threads the bilayer; the sequence is SSFFGVMGASSAMVFSAMGAAYG. The Cytoplasmic segment spans residues 34–55; it reads TAKSGTGIAAMSVMRPELIMKS. The helical transmembrane segment at 56 to 76 threads the bilayer; the sequence is IIPVVMAGIIAIYGLVVAVLI. The Lumenal segment spans residues 77-92; the sequence is ANSLTDGITLYRSFLQ. The helical transmembrane segment at 93–114 threads the bilayer; that stretch reads LGAGLSVGLSGLAAGFAIGIVG. The Cytoplasmic portion of the chain corresponds to 115 to 131; sequence DAGVRGTAQQPRLFVGM. A helical membrane pass occupies residues 132-152; it reads ILILIFAEVLGLYGLIVALIL. Residues 153–155 are Lumenal-facing; sequence STK.

This sequence belongs to the V-ATPase proteolipid subunit family. As to quaternary structure, V-ATPase is a heteromultimeric enzyme made up of two complexes: the ATP-hydrolytic V1 complex and the proton translocation V0 complex. The V1 complex consists of three catalytic AB heterodimers that form a heterohexamer, three peripheral stalks each consisting of EG heterodimers, one central rotor including subunits D and F, and the regulatory subunits C and H. The proton translocation complex V0 consists of the proton transport subunit a, a ring of proteolipid subunits c9c'', rotary subunit d, subunits e and f, and the accessory subunits ATP6AP1/Ac45 and ATP6AP2/PRR. Interacts with the V0 complex V-ATPase subunit a4 ATP6V0A4. Interacts with LASS2. Interacts with RNF182; this interaction leads to ubiquitination and degradation via the proteasome pathway. Ubiquitinated by RNF182, leading to its degradation via the ubiquitin-proteasome pathway.

The protein localises to the cytoplasmic vesicle. It localises to the clathrin-coated vesicle membrane. It is found in the secretory vesicle. Its subcellular location is the synaptic vesicle membrane. Its function is as follows. Proton-conducting pore forming subunit of the V0 complex of vacuolar(H+)-ATPase (V-ATPase), a multisubunit enzyme composed of a peripheral complex (V1) that hydrolyzes ATP and a membrane integral complex (V0) that translocates protons. V-ATPase is responsible for acidifying and maintaining the pH of intracellular compartments and in some cell types, is targeted to the plasma membrane, where it is responsible for acidifying the extracellular environment. The chain is V-type proton ATPase 16 kDa proteolipid subunit c (Atp6v0c) from Mus musculus (Mouse).